Reading from the N-terminus, the 309-residue chain is Protein FdhE homolog (309 aa).

The protein belongs to the FdhE family.

It is found in the cytoplasm. Its function is as follows. Necessary for formate dehydrogenase activity. This chain is Protein FdhE homolog, found in Pseudomonas aeruginosa (strain ATCC 15692 / DSM 22644 / CIP 104116 / JCM 14847 / LMG 12228 / 1C / PRS 101 / PAO1).